A 432-amino-acid polypeptide reads, in one-letter code: MPHSPLISIPHVWCHPEEEERMHDELLQAVSKGPVMFRDVSIDFSQEEWECLDADQMNLYKEVMLENFSNLVSVGLSNSKPAVISLLEQGKEPWMVDRELTRGLCSDLESMCETKILSLKKRHFSQVIITREDMSTFIQPTFLIPPQKTMSEEKPWECKICGKTFNQNSQFIQHQRIHFGEKHYESKEYGKSFSRGSLVTRHQRIHTGKKPYECKECGKAFSCSSYFSQHQRIHTGEKPYECKECGKAFKYCSNLNDHQRIHTGEKPYECKVCGKAFTKSSQLFLHLRIHTGEKPYECKECGKAFTQHSRLIQHQRMHTGEKPYECKQCGKAFNSASTLTNHHRIHAGEKLYECEECRKAFIQSSELIQHQRIHTDEKPYECNECGKAFNKGSNLTRHQRIHTGEKPYDCKECGKAFGSRSDLIRHEGIHTG.

The KRAB domain maps to 35–106 (VMFRDVSIDF…DRELTRGLCS (72 aa)). The C2H2-type 1 zinc finger occupies 156-178 (WECKICGKTFNQNSQFIQHQRIH). The C2H2-type 2; degenerate zinc finger occupies 184-206 (YESKEYGKSFSRGSLVTRHQRIH). C2H2-type zinc fingers lie at residues 212 to 234 (YECK…QRIH), 240 to 262 (YECK…QRIH), 268 to 290 (YECK…LRIH), 296 to 318 (YECK…QRMH), 324 to 346 (YECK…HRIH), 352 to 374 (YECE…QRIH), 380 to 402 (YECN…QRIH), and 408 to 430 (YDCK…EGIH).

The protein belongs to the krueppel C2H2-type zinc-finger protein family.

Its subcellular location is the nucleus. In terms of biological role, may be involved in transcriptional regulation. This is Zinc finger protein 829 (ZNF829) from Homo sapiens (Human).